The primary structure comprises 851 residues: DNA mismatch repair protein MutS (851 aa).

602–609 serves as a coordination point for ATP; the sequence is GPNMSGKS.

Belongs to the DNA mismatch repair MutS family.

Functionally, this protein is involved in the repair of mismatches in DNA. It is possible that it carries out the mismatch recognition step. This protein has a weak ATPase activity. The chain is DNA mismatch repair protein MutS from Streptococcus pyogenes serotype M3 (strain SSI-1).